Consider the following 544-residue polypeptide: NAD(P)H-quinone oxidoreductase chain 4 (544 aa).

The next 14 membrane-spanning stretches (helical) occupy residues 29–49 (FPWL…IPLV), 60–80 (WYAL…YLNG), 115–135 (LILL…PVTF), 139–159 (LFFF…AVQD), 161–181 (LLFF…LAIW), 193–213 (FILY…AMAF), 234–254 (GFQA…LPIV), 268–288 (TAPV…YALF), 302–322 (FAPL…LTSF), 339–359 (MGFV…GAML), 360–380 (QMIS…ATYD), 400–422 (MFAM…GFVS), 442–462 (IVID…LLSM), and 488–508 (IYII…PKLV).

The protein belongs to the complex I subunit 4 family.

It is found in the cellular thylakoid membrane. It catalyses the reaction a plastoquinone + NADH + (n+1) H(+)(in) = a plastoquinol + NAD(+) + n H(+)(out). It carries out the reaction a plastoquinone + NADPH + (n+1) H(+)(in) = a plastoquinol + NADP(+) + n H(+)(out). NDH-1 shuttles electrons from NAD(P)H, via FMN and iron-sulfur (Fe-S) centers, to quinones in the respiratory chain. The immediate electron acceptor for the enzyme in this species is believed to be plastoquinone. Couples the redox reaction to proton translocation (for every two electrons transferred, four hydrogen ions are translocated across the cytoplasmic membrane), and thus conserves the redox energy in a proton gradient. This Synechococcus sp. (strain RCC307) protein is NAD(P)H-quinone oxidoreductase chain 4.